A 424-amino-acid polypeptide reads, in one-letter code: Lipoamide acyltransferase component of branched-chain alpha-keto acid dehydrogenase complex (424 aa).

Residues 3–78 form the Lipoyl-binding domain; sequence IEQMTMPQLG…QVGEMICKIE (76 aa). Lysine 44 is modified (N6-lipoyllysine). Residues 82–115 are disordered; the sequence is ANPAEQKQEQPAASEAAENPVAKSAGAADQPNKK. Positions 116 to 153 constitute a Peripheral subunit-binding (PSBD) domain; it reads RYSPAVLRLAGEHGIDLDQVTGTGAGGRITRKDIQRLI. Positions 154–193 are disordered; sequence ETGGVQEQNPEELKTAAPAPKSASKPEPKEETSYPASAAG. Residues histidine 395 and aspartate 399 contribute to the active site.

This sequence belongs to the 2-oxoacid dehydrogenase family. Forms a 24-polypeptide structural core with octahedral symmetry. (R)-lipoate is required as a cofactor.

It carries out the reaction N(6)-[(R)-dihydrolipoyl]-L-lysyl-[protein] + 2-methylpropanoyl-CoA = N(6)-[(R)-S(8)-2-methylpropanoyldihydrolipoyl]-L-lysyl-[protein] + CoA. Its function is as follows. The branched-chain alpha-keto dehydrogenase complex catalyzes the overall conversion of alpha-keto acids to acyl-CoA and CO(2). It contains multiple copies of three enzymatic components: branched-chain alpha-keto acid decarboxylase (E1), lipoamide acyltransferase (E2) and lipoamide dehydrogenase (E3). The chain is Lipoamide acyltransferase component of branched-chain alpha-keto acid dehydrogenase complex (bfmBB) from Bacillus subtilis (strain 168).